Consider the following 967-residue polypeptide: MTFAVGQRWMSESENNLGLGLIVAIDRRTVTILFPASEEQRIYALNSAPLTRVLFQIGDEIAHHEGWKGNVLDILENNGVAFYLLKRQDNGEEITIQERDIAHQMTFSKPQDRLFTTQIDRNEHFTLRYQALTHQQAQFQSPLRGLRGIRAGLIPHQLHIAREVGQRTAPRVLLADEVGLGKTIEAGMILQQQLFAEKVERVLIIVPETLQHQWLVEMLRRFNLHFALFDEERCADFEDPASALWINPFNTESQIICALDWLCEKPKRVEQLLEAGFDMLIVDEAHHLGWSEHNPSLEYQLVEQLARQIPAVLLLTATPEQLGQESHFARLSLLDPDRFYDYQAFVQEQQQYQPVAEAVQSLLADKPLSAVEKNHISDLLSEQDVEPLLKVLDSQAHDEQKALARQELIDNLIDRHGTSRVLFRNTRQGVKGFPHRTYNQITLELPKQYNNAANVLAMLGEKGDNDSFYPEQMFQKLNPDARWWEFDPRLEWLITFLKNHREEKVLVICRHANTAIQLEQALREKEAIRAAVFHEKLSIVERDRAAAYFAQQEDGAQLLLSSSIGSEGRNFQFASHLVLFNLPDDPDLLEQCIGRLDRIGQRRDIQIHVPCFADTAQVVLARWYHEGLNAFEETCPMGMTLFEAHQTQLNKFLQNPTALEGFAEFVSLTRKQQHELKQALEKGRDRLLELNSNGGEQAQQLATDIAEQDGTTELVNFTLNLFDIIGVDQEDLGEKSIVITLASNMLVPDFPGLKEEGATVTFDRQLSLAREDVEFISWDHPLIRHGIDLITSGDIGKSAVSLLINKALPAGTLLLEMIYVVEAQAPKGLQLTRFLPPTPIRLLLDQKGNNLAEQVSFSALQKQLKPIGKNMANKVVKMVRPNIEQLVKLSEQKIVAQAQQIIHNAQQLADQTLSAELNRLTALQAVNKNIRQDEVDALDNIRSQSLAQLQQATWRLDSLRVIVSNKE.

The 175-residue stretch at 163–337 (EVGQRTAPRV…FARLSLLDPD (175 aa)) folds into the Helicase ATP-binding domain. 176-183 (DEVGLGKT) lines the ATP pocket. Positions 283-286 (DEAH) match the DEAH box motif. Positions 489–660 (RLEWLITFLK…KFLQNPTALE (172 aa)) constitute a Helicase C-terminal domain.

The protein belongs to the SNF2/RAD54 helicase family. RapA subfamily. Interacts with the RNAP. Has a higher affinity for the core RNAP than for the holoenzyme. Its ATPase activity is stimulated by binding to RNAP.

Transcription regulator that activates transcription by stimulating RNA polymerase (RNAP) recycling in case of stress conditions such as supercoiled DNA or high salt concentrations. Probably acts by releasing the RNAP, when it is trapped or immobilized on tightly supercoiled DNA. Does not activate transcription on linear DNA. Probably not involved in DNA repair. The polypeptide is RNA polymerase-associated protein RapA (Pasteurella multocida (strain Pm70)).